The following is a 492-amino-acid chain: Fascin-2 (492 aa).

The protein belongs to the fascin family. Exclusively expressed in the eye, specifically in photoreceptor cells.

It localises to the cytoplasm. The protein resides in the cytoskeleton. It is found in the cell projection. Its subcellular location is the stereocilium. Acts as an actin bundling protein. May play a pivotal role in photoreceptor cell-specific events, such as disk morphogenesis. The protein is Fascin-2 (FSCN2) of Bos taurus (Bovine).